A 500-amino-acid polypeptide reads, in one-letter code: Probable cytosol aminopeptidase (500 aa).

Mn(2+)-binding residues include K262 and D267. The active site involves K274. D285, D344, and E346 together coordinate Mn(2+). R348 is an active-site residue.

Belongs to the peptidase M17 family. Mn(2+) serves as cofactor.

The protein localises to the cytoplasm. The enzyme catalyses Release of an N-terminal amino acid, Xaa-|-Yaa-, in which Xaa is preferably Leu, but may be other amino acids including Pro although not Arg or Lys, and Yaa may be Pro. Amino acid amides and methyl esters are also readily hydrolyzed, but rates on arylamides are exceedingly low.. It carries out the reaction Release of an N-terminal amino acid, preferentially leucine, but not glutamic or aspartic acids.. In terms of biological role, presumably involved in the processing and regular turnover of intracellular proteins. Catalyzes the removal of unsubstituted N-terminal amino acids from various peptides. The protein is Probable cytosol aminopeptidase of Ehrlichia ruminantium (strain Gardel).